The chain runs to 159 residues: Transcription elongation factor GreA (159 aa).

The stretch at 2-77 (EENKEFLLTQ…LENMVRKAVI (76 aa)) forms a coiled coil.

It belongs to the GreA/GreB family.

In terms of biological role, necessary for efficient RNA polymerase transcription elongation past template-encoded arresting sites. The arresting sites in DNA have the property of trapping a certain fraction of elongating RNA polymerases that pass through, resulting in locked ternary complexes. Cleavage of the nascent transcript by cleavage factors such as GreA or GreB allows the resumption of elongation from the new 3'terminus. GreA releases sequences of 2 to 3 nucleotides. This chain is Transcription elongation factor GreA, found in Clostridioides difficile (strain 630) (Peptoclostridium difficile).